Reading from the N-terminus, the 165-residue chain is MDIKVVKGSITEVDADVIVNPANSRGLMGGGVAVVIKRLGGEEIEREAVEKAPIPVGSAVLTTAGKLKFKGVIHAPTMEEPAMPSSEEKVRKATRAALELADKECFKIVAIPGMGTGVGGVPKEVAARAMVEEIRKFEPKCLEKVILVDIDEEMVEAWEKVLGLR.

Residues 1–165 (MDIKVVKGSI…EAWEKVLGLR (165 aa)) form the Macro domain.

This is an uncharacterized protein from Aquifex aeolicus (strain VF5).